The sequence spans 479 residues: 3-isopropylmalate dehydratase large subunit (479 aa).

Residues C350, C415, and C418 each contribute to the [4Fe-4S] cluster site.

It belongs to the aconitase/IPM isomerase family. LeuC type 1 subfamily. As to quaternary structure, heterodimer of LeuC and LeuD. It depends on [4Fe-4S] cluster as a cofactor.

It catalyses the reaction (2R,3S)-3-isopropylmalate = (2S)-2-isopropylmalate. The protein operates within amino-acid biosynthesis; L-leucine biosynthesis; L-leucine from 3-methyl-2-oxobutanoate: step 2/4. Catalyzes the isomerization between 2-isopropylmalate and 3-isopropylmalate, via the formation of 2-isopropylmaleate. The chain is 3-isopropylmalate dehydratase large subunit from Caulobacter vibrioides (strain ATCC 19089 / CIP 103742 / CB 15) (Caulobacter crescentus).